Consider the following 142-residue polypeptide: Small ribosomal subunit protein uS12 (142 aa).

Belongs to the universal ribosomal protein uS12 family. In terms of assembly, part of the 30S ribosomal subunit.

Its function is as follows. With S4 and S5 plays an important role in translational accuracy. Located at the interface of the 30S and 50S subunits. This chain is Small ribosomal subunit protein uS12, found in Thermoplasma volcanium (strain ATCC 51530 / DSM 4299 / JCM 9571 / NBRC 15438 / GSS1).